The sequence spans 144 residues: Maximins 4/H3 type 1 (144 aa).

Residues 1–18 (MNFKYIIAVSFFIASAYA) form the signal peptide. Residues 19 to 43 (RSEEKDVQSLSQRDVLEEESLREIR) constitute a propeptide that is removed on maturation. Residue asparagine 70 is modified to Asparagine amide. Positions 74 to 123 (TAEDHEVMKRLEAVMRDLDSLDHPEEASERETRGFNQEEIANLFTKKEKR) are excised as a propeptide. Isoleucine 143 carries the isoleucine amide modification.

This sequence belongs to the bombinin family. As to expression, expressed by the skin glands.

The protein localises to the secreted. Functionally, maximin-4 shows antibacterial activity against both Gram-positive and Gram-negative bacteria. It also shows antimicrobial activity against the fungus C.albicans, but not against A.flavus nor P.uticale. It has little hemolytic activity. It does not possess a significant cytotoxicity against tumor cell lines. It does not possess a significant anti-HIV activity. In terms of biological role, maximin-H3 shows antibacterial activity against both Gram-positive and Gram-negative bacteria. It also shows antimicrobial activity against the fungus C.albicans. Shows strong hemolytic activity. The polypeptide is Maximins 4/H3 type 1 (Bombina maxima (Giant fire-bellied toad)).